A 72-amino-acid chain; its full sequence is Translation initiation factor IF-1 (72 aa).

Residues 1–72 (MAKEDVIEMQ…SKGRIVFRAR (72 aa)) form the S1-like domain.

Belongs to the IF-1 family. As to quaternary structure, component of the 30S ribosomal translation pre-initiation complex which assembles on the 30S ribosome in the order IF-2 and IF-3, IF-1 and N-formylmethionyl-tRNA(fMet); mRNA recruitment can occur at any time during PIC assembly.

Its subcellular location is the cytoplasm. Its function is as follows. One of the essential components for the initiation of protein synthesis. Stabilizes the binding of IF-2 and IF-3 on the 30S subunit to which N-formylmethionyl-tRNA(fMet) subsequently binds. Helps modulate mRNA selection, yielding the 30S pre-initiation complex (PIC). Upon addition of the 50S ribosomal subunit IF-1, IF-2 and IF-3 are released leaving the mature 70S translation initiation complex. This chain is Translation initiation factor IF-1, found in Pseudoalteromonas translucida (strain TAC 125).